Here is a 76-residue protein sequence, read N- to C-terminus: Acyl carrier protein (76 aa).

Residues 1-75 (MVFEKIKALI…DIVFYITKNT (75 aa)) form the Carrier domain. Serine 35 carries the O-(pantetheine 4'-phosphoryl)serine modification.

Belongs to the acyl carrier protein (ACP) family. Post-translationally, 4'-phosphopantetheine is transferred from CoA to a specific serine of apo-ACP by AcpS. This modification is essential for activity because fatty acids are bound in thioester linkage to the sulfhydryl of the prosthetic group.

It is found in the cytoplasm. It functions in the pathway lipid metabolism; fatty acid biosynthesis. Carrier of the growing fatty acid chain in fatty acid biosynthesis. In Onion yellows phytoplasma (strain OY-M), this protein is Acyl carrier protein.